The following is an 86-amino-acid chain: Large ribosomal subunit protein bL27 (86 aa).

The tract at residues 1–23 is disordered; that stretch reads MAHKKAGGSTRNGRDSESKRLGV.

This sequence belongs to the bacterial ribosomal protein bL27 family.

The chain is Large ribosomal subunit protein bL27 from Alkalilimnicola ehrlichii (strain ATCC BAA-1101 / DSM 17681 / MLHE-1).